The sequence spans 953 residues: Valine--tRNA ligase (953 aa).

Positions 42 to 52 match the 'HIGH' region motif; that stretch reads PNVTGSLHMGH. The short motif at 554–558 is the 'KMSKS' region element; it reads KMSKS. Lysine 557 lines the ATP pocket. A coiled-coil region spans residues 884 to 953; it reads LIDKDAELAR…EAQKETIAAL (70 aa).

It belongs to the class-I aminoacyl-tRNA synthetase family. ValS type 1 subfamily. Monomer.

The protein localises to the cytoplasm. The enzyme catalyses tRNA(Val) + L-valine + ATP = L-valyl-tRNA(Val) + AMP + diphosphate. Its function is as follows. Catalyzes the attachment of valine to tRNA(Val). As ValRS can inadvertently accommodate and process structurally similar amino acids such as threonine, to avoid such errors, it has a 'posttransfer' editing activity that hydrolyzes mischarged Thr-tRNA(Val) in a tRNA-dependent manner. This Photobacterium profundum (strain SS9) protein is Valine--tRNA ligase.